We begin with the raw amino-acid sequence, 383 residues long: Protein salvador homolog 1 (383 aa).

A phosphoserine mark is found at S94 and S136. 2 consecutive WW domains span residues 199-232 (LPLP…HPLE) and 234-267 (EGLP…HPCA). Residue T210 is modified to Phosphothreonine. Residues 321–368 (ILKWELFQLADLDTYQGMLKLLFMKELEQIVKMYEAYRQALLTELENR) form the SARAH domain. The stretch at 344 to 373 (MKELEQIVKMYEAYRQALLTELENRKQRQQ) forms a coiled coil.

Homodimer. Stabilized through interaction with STK3/MST2 or STK4/MST1. Interacts (via SARAH domain) with isoform 1 of NEK2. Interacts with ESR1 only in the presence of STK3/MST2. Interacts with WTIP and AJUBA. Post-translationally, phosphorylated by STK3/MST2 and STK4/MST1. Phosphorylation is not required for SAV1 stability and may increase the number of protein binding sites on the scaffold molecule. As to expression, ubiquitously expressed in adult tissues with highest expression in the pancreas, aorta and interventricular septum and lowest expression in skeletal muscle. Expression was higher in fetal than in the adult heart. Expressed in various cell lines.

The protein resides in the nucleus. It localises to the cytoplasm. Regulator of STK3/MST2 and STK4/MST1 in the Hippo signaling pathway which plays a pivotal role in organ size control and tumor suppression by restricting proliferation and promoting apoptosis. The core of this pathway is composed of a kinase cascade wherein STK3/MST2 and STK4/MST1, in complex with its regulatory protein SAV1, phosphorylates and activates LATS1/2 in complex with its regulatory protein MOB1, which in turn phosphorylates and inactivates YAP1 oncoprotein and WWTR1/TAZ. Phosphorylation of YAP1 by LATS1/2 inhibits its translocation into the nucleus to regulate cellular genes important for cell proliferation, cell death, and cell migration. SAV1 is required for STK3/MST2 and STK4/MST1 activation and promotes cell-cycle exit and terminal differentiation in developing epithelial tissues. Plays a role in centrosome disjunction by regulating the localization of NEK2 to centrosomes, and its ability to phosphorylate CROCC and CEP250. In conjunction with STK3/MST2, activates the transcriptional activity of ESR1 through the modulation of its phosphorylation. The sequence is that of Protein salvador homolog 1 from Homo sapiens (Human).